Consider the following 375-residue polypeptide: MMDNINFEFSNASQGSRLQLQQQPPQPFNLQDLNMIQYNQPSSPWTTETFSGLTPYDCTANQSFPVQCSSSKPYPSSFHPYHHQSSDSPSLDQSVSMIPMQPLPDQYMKPLYQRSCSNDFAATNASSASYSLSFEASHDPQELCRRTYSNSNVTHLNFTSSQHQPKQSHPRFSSPPSFSIHGGSMAPNCVNKTRIRWTQDLHEKFVECVNRLGGADKATPKAILKRMDSDGLTIFHVKSHLQKYRIAKYMPESQEGKFEKRACAKELSQLDTRTGVQIKEALQLQLDVQRHLHEQLEIQRNLQLRIEEQGKQLKMMMEQQQKNKESLLKKLPDAEASLSLLDPHIHSPPSPFLVHDAEALMLTSYEDTQLQSTKS.

Residues 159–171 (TSSQHQPKQSHPR) show a composition bias toward polar residues. A disordered region spans residues 159–178 (TSSQHQPKQSHPRFSSPPSF). The region spanning 189–249 (CVNKTRIRWT…HLQKYRIAKY (61 aa)) is the HTH myb-type domain. Positions 220-245 (PKAILKRMDSDGLTIFHVKSHLQKYR) form a DNA-binding region, H-T-H motif. The stretch at 279 to 299 (KEALQLQLDVQRHLHEQLEIQ) forms a coiled coil. The LHEQLE signature appears at 292-297 (LHEQLE).

The protein belongs to the MYB-CC family.

The protein resides in the nucleus. The protein is Myb family transcription factor PHL5 of Arabidopsis thaliana (Mouse-ear cress).